The sequence spans 101 residues: MAKKSKIVKNEQRRELVQRYAERRAELKRTIRDPASSPERRAAAVSALQRLPRDSSPVRLRNRDVVDGRPRGHLRKFGLSRVRVREMAHRGELPGVRKASW.

The protein belongs to the universal ribosomal protein uS14 family. Part of the 30S ribosomal subunit. Contacts proteins S3 and S10.

Its function is as follows. Binds 16S rRNA, required for the assembly of 30S particles and may also be responsible for determining the conformation of the 16S rRNA at the A site. The protein is Small ribosomal subunit protein uS14A of Mycolicibacterium smegmatis (strain ATCC 700084 / mc(2)155) (Mycobacterium smegmatis).